Here is a 294-residue protein sequence, read N- to C-terminus: Protein C3orf33 homolog (294 aa).

At Ala-2 the chain carries N-acetylalanine. Residues 36–53 form a helical membrane-spanning segment; sequence LVQNISTGMAIAGIMLLI. The disordered stretch occupies residues 244-271; that stretch reads KPAGADLGSTKDSYHDSRRRASGKGKDS.

It localises to the membrane. May play a role in transcription regulation. The polypeptide is Protein C3orf33 homolog (Mus musculus (Mouse)).